The following is a 390-amino-acid chain: Formamidopyrimidine-DNA glycosylase (390 aa).

Residue Pro-2 is the Schiff-base intermediate with DNA of the active site. Residue Glu-3 is the Proton donor of the active site. Lys-60 serves as the catalytic Proton donor; for beta-elimination activity. DNA is bound by residues Tyr-107, Arg-126, Lys-167, and Asn-186. The disordered stretch occupies residues 283 to 390; the sequence is AEKAAKVRPA…AGKKPKGRKS (108 aa). Residues 301-316 are compositionally biased toward acidic residues; that stretch reads DDGDGEEDEQETEKED. Over residues 321 to 337 the composition is skewed to basic residues; sequence SKKGQKPRGGRGKKPAS. The segment covering 343-355 has biased composition (acidic residues); that stretch reads ESDDDGDDSEAEE. A compositionally biased stretch (basic residues) spans 360–370; sequence PKGRGTKPAIK.

Belongs to the FPG family. As to quaternary structure, monomer. In terms of tissue distribution, expressed in leaves (at protein levels).

It is found in the nucleus. The enzyme catalyses Hydrolysis of DNA containing ring-opened 7-methylguanine residues, releasing 2,6-diamino-4-hydroxy-5-(N-methyl)formamidopyrimidine.. The catalysed reaction is 2'-deoxyribonucleotide-(2'-deoxyribose 5'-phosphate)-2'-deoxyribonucleotide-DNA = a 3'-end 2'-deoxyribonucleotide-(2,3-dehydro-2,3-deoxyribose 5'-phosphate)-DNA + a 5'-end 5'-phospho-2'-deoxyribonucleoside-DNA + H(+). Involved in base excision repair of DNA damaged by oxidation or by mutagenic agents. Acts as a DNA glycosylase that recognizes and removes damaged bases. Can process efficiently 4,6-diamino-5-formamidopyrimidine (FapyA), 2,6-diamino-4- hydroxy-5-formamidopyrimidine (FapyG) and the further oxidation products of 8-oxoguanine (8-oxoG), such as guanidinohydantoin and spiroiminodihydantoin. Has marginal activity towards 8-oxoG. Has AP (apurinic/apyrimidinic) lyase activity. Cleaves the DNA backbone by beta-delta elimination to generate a single-strand break at the site of the removed base with both 3'- and 5'-phosphates. The sequence is that of Formamidopyrimidine-DNA glycosylase (FPG1) from Arabidopsis thaliana (Mouse-ear cress).